The following is a 261-amino-acid chain: uncharacterized protein (261 aa).

Positions 7, 9, 96, 132, 156, and 211 each coordinate a divalent metal cation.

It belongs to the metallo-dependent hydrolases superfamily. TatD-type hydrolase family. It depends on a divalent metal cation as a cofactor.

This is an uncharacterized protein from Mycoplasma pneumoniae (strain ATCC 29342 / M129 / Subtype 1) (Mycoplasmoides pneumoniae).